We begin with the raw amino-acid sequence, 155 residues long: 6,7-dimethyl-8-ribityllumazine synthase (155 aa).

Residues F22, 56-58 (AFE), and 80-82 (AVI) each bind 5-amino-6-(D-ribitylamino)uracil. 85 to 86 (AT) serves as a coordination point for (2S)-2-hydroxy-3-oxobutyl phosphate. Residue H88 is the Proton donor of the active site. F113 lines the 5-amino-6-(D-ribitylamino)uracil pocket. R127 is a binding site for (2S)-2-hydroxy-3-oxobutyl phosphate.

This sequence belongs to the DMRL synthase family.

The enzyme catalyses (2S)-2-hydroxy-3-oxobutyl phosphate + 5-amino-6-(D-ribitylamino)uracil = 6,7-dimethyl-8-(1-D-ribityl)lumazine + phosphate + 2 H2O + H(+). The protein operates within cofactor biosynthesis; riboflavin biosynthesis; riboflavin from 2-hydroxy-3-oxobutyl phosphate and 5-amino-6-(D-ribitylamino)uracil: step 1/2. Its function is as follows. Catalyzes the formation of 6,7-dimethyl-8-ribityllumazine by condensation of 5-amino-6-(D-ribitylamino)uracil with 3,4-dihydroxy-2-butanone 4-phosphate. This is the penultimate step in the biosynthesis of riboflavin. This is 6,7-dimethyl-8-ribityllumazine synthase from Clostridium acetobutylicum (strain ATCC 824 / DSM 792 / JCM 1419 / IAM 19013 / LMG 5710 / NBRC 13948 / NRRL B-527 / VKM B-1787 / 2291 / W).